We begin with the raw amino-acid sequence, 424 residues long: GTPase Obg (424 aa).

Residues 1–160 (MFDRVEINIK…YDLILELKLI (160 aa)) enclose the Obg domain. An OBG-type G domain is found at 161–328 (ADVAIIGYPN…LLAKVAEKLD (168 aa)). Residues 167-174 (GYPNVGKS), 192-196 (FTTLS), 213-216 (EVPG), 280-283 (NKID), and 309-311 (SAL) each bind GTP. Serine 174 and threonine 194 together coordinate Mg(2+). The 76-residue stretch at 349 to 424 (PAPKGKMGFR…IITGRMEWYL (76 aa)) folds into the OCT domain.

The protein belongs to the TRAFAC class OBG-HflX-like GTPase superfamily. OBG GTPase family. As to quaternary structure, monomer. It depends on Mg(2+) as a cofactor.

The protein resides in the cytoplasm. Functionally, an essential GTPase which binds GTP, GDP and possibly (p)ppGpp with moderate affinity, with high nucleotide exchange rates and a fairly low GTP hydrolysis rate. Plays a role in control of the cell cycle, stress response, ribosome biogenesis and in those bacteria that undergo differentiation, in morphogenesis control. This chain is GTPase Obg, found in Dehalococcoides mccartyi (strain ATCC BAA-2100 / JCM 16839 / KCTC 5957 / BAV1).